The primary structure comprises 211 residues: Redox-sensing transcriptional repressor Rex (211 aa).

Positions 17 to 56 (LYYRFIQNFAQEGMERISSKELSEAMKIDSATIRRDFSYF) form a DNA-binding region, H-T-H motif. Residue 91–96 (GVGNLG) participates in NAD(+) binding.

It belongs to the transcriptional regulatory Rex family. Homodimer.

Its subcellular location is the cytoplasm. In terms of biological role, modulates transcription in response to changes in cellular NADH/NAD(+) redox state. In Lysinibacillus sphaericus (strain C3-41), this protein is Redox-sensing transcriptional repressor Rex.